The primary structure comprises 174 residues: MSAKGWNASKPSERILLTLRRFKRSAASETKPATQAKRMEPQACRKRRTLRISMNHTSQQKDQTMSAMYLKIIRDVENAILRLWRRSGPLERTSNQDLEYDVIMFMITAVKRLRESKMLTVSWYLQALSVIEDSREEKEALMIALRILAKIIPKEMLHLTGDILSALNRTEQLM.

Belongs to the morbillivirus protein C family.

This Canine distemper virus (strain Onderstepoort) (CDV) protein is Protein C (P/V/C).